Here is a 439-residue protein sequence, read N- to C-terminus: Ribosomal protein uS12 methylthiotransferase RimO (439 aa).

In terms of domain architecture, MTTase N-terminal spans 3-118; it reads KKFYITTLGC…AGKILREKFP (116 aa). [4Fe-4S] cluster-binding residues include C12, C48, C81, C157, C161, and C164. A Radical SAM core domain is found at 143–370; the sequence is NYSKPYAYVK…RDVHLAILEE (228 aa). A TRAM domain is found at 373 to 438; it reads ESRIGQTYDA…EYDMNGTWIS (66 aa).

It belongs to the methylthiotransferase family. RimO subfamily. [4Fe-4S] cluster is required as a cofactor.

It localises to the cytoplasm. The catalysed reaction is L-aspartate(89)-[ribosomal protein uS12]-hydrogen + (sulfur carrier)-SH + AH2 + 2 S-adenosyl-L-methionine = 3-methylsulfanyl-L-aspartate(89)-[ribosomal protein uS12]-hydrogen + (sulfur carrier)-H + 5'-deoxyadenosine + L-methionine + A + S-adenosyl-L-homocysteine + 2 H(+). In terms of biological role, catalyzes the methylthiolation of an aspartic acid residue of ribosomal protein uS12. The sequence is that of Ribosomal protein uS12 methylthiotransferase RimO from Leptospira borgpetersenii serovar Hardjo-bovis (strain L550).